A 392-amino-acid polypeptide reads, in one-letter code: Pyoverdine export membrane fusion protein PvdR (392 aa).

The segment at residues 1–36 (MRRSTHTRRRLLLGGLGLLGLGSLLAWTSLPFGAQP) is a signal peptide (tat-type signal). The stretch at 109–181 (IDNLKAQLAE…NASLRSDEAE (73 aa)) forms a coiled coil. The segment at 267–286 (PPKPLDQTSQGGGSPASATA) is disordered.

The protein belongs to the membrane fusion protein (MFP) (TC 8.A.1) family. As to quaternary structure, part of the tripartite efflux system PvdRT-OpmQ, which is composed of an inner membrane component with both ATPase and permease domains, PvdT, a periplasmic membrane fusion protein, PvdR, and an outer membrane component, OpmQ. Predicted to be exported by the Tat system. The position of the signal peptide cleavage has not been experimentally proven.

Its subcellular location is the periplasm. Functionally, part of the tripartite efflux system PvdRT-OpmQ required for the secretion into the extracellular milieu of the siderophore pyoverdine (PVD), which is involved in iron acquisition. This subunit is an adapter protein that stimulates the ATPase activity of PvdT and connects the inner and outer membrane components. The system is responsible for export of newly synthesized PVD after the final steps of biosynthesis have taken place in the periplasm. It is also responsible for recycling of PVD after internalization of ferri-PVD into the periplasm by the outer-membrane receptor FpvA and release of iron from PVD, thus making PVD available for new cycles of iron uptake. Contributes to resistance against ampicillin. In Pseudomonas putida (strain ATCC 47054 / DSM 6125 / CFBP 8728 / NCIMB 11950 / KT2440), this protein is Pyoverdine export membrane fusion protein PvdR.